The primary structure comprises 64 residues: Large ribosomal subunit protein bL28 (64 aa).

This sequence belongs to the bacterial ribosomal protein bL28 family.

This Elusimicrobium minutum (strain Pei191) protein is Large ribosomal subunit protein bL28.